The following is a 556-amino-acid chain: 2-succinyl-5-enolpyruvyl-6-hydroxy-3-cyclohexene-1-carboxylate synthase (556 aa).

Belongs to the TPP enzyme family. MenD subfamily. Homodimer. Mg(2+) serves as cofactor. The cofactor is Mn(2+). It depends on thiamine diphosphate as a cofactor.

The catalysed reaction is isochorismate + 2-oxoglutarate + H(+) = 5-enolpyruvoyl-6-hydroxy-2-succinyl-cyclohex-3-ene-1-carboxylate + CO2. It functions in the pathway quinol/quinone metabolism; 1,4-dihydroxy-2-naphthoate biosynthesis; 1,4-dihydroxy-2-naphthoate from chorismate: step 2/7. It participates in quinol/quinone metabolism; menaquinone biosynthesis. In terms of biological role, catalyzes the thiamine diphosphate-dependent decarboxylation of 2-oxoglutarate and the subsequent addition of the resulting succinic semialdehyde-thiamine pyrophosphate anion to isochorismate to yield 2-succinyl-5-enolpyruvyl-6-hydroxy-3-cyclohexene-1-carboxylate (SEPHCHC). The protein is 2-succinyl-5-enolpyruvyl-6-hydroxy-3-cyclohexene-1-carboxylate synthase of Klebsiella pneumoniae subsp. pneumoniae (strain ATCC 700721 / MGH 78578).